A 119-amino-acid polypeptide reads, in one-letter code: Large ribosomal subunit protein bL20 (119 aa).

The protein belongs to the bacterial ribosomal protein bL20 family.

Its function is as follows. Binds directly to 23S ribosomal RNA and is necessary for the in vitro assembly process of the 50S ribosomal subunit. It is not involved in the protein synthesizing functions of that subunit. This Nitrobacter winogradskyi (strain ATCC 25391 / DSM 10237 / CIP 104748 / NCIMB 11846 / Nb-255) protein is Large ribosomal subunit protein bL20.